Reading from the N-terminus, the 354-residue chain is Rhodopsin (354 aa).

Over 1–36 (MNGTEGPNFYVPFSNKSGVVRSPFEYPQYYLAEPWQ) the chain is Extracellular. Asn-2 and Asn-15 each carry an N-linked (GlcNAc...) asparagine glycan. Residues 37-61 (YSVLAAYMFLLILLGFPVNFLTLYV) form a helical membrane-spanning segment. Topologically, residues 62–73 (TIQHKKLRTPLN) are cytoplasmic. A helical membrane pass occupies residues 74–96 (YILLNLAFANHFMVFGGFPVTMY). Residues 97-110 (SSMHGYFVFGQTGC) lie on the Extracellular side of the membrane. Cys-110 and Cys-187 form a disulfide bridge. Residues 111–133 (YIEGFFATMGGEIALWSLVVLAI) traverse the membrane as a helical segment. Positions 134-136 (ERY) match the 'Ionic lock' involved in activated form stabilization motif. Over 134–152 (ERYVVVCKPMSNFRFGENH) the chain is Cytoplasmic. Residues 153–173 (AIMGVMMTWIMALACAAPPLF) form a helical membrane-spanning segment. The Extracellular portion of the chain corresponds to 174–202 (GWSRYIPEGMQCSCGVDYYTLKPEVNNES). A helical transmembrane segment spans residues 203-224 (FVIYMFLVHFTIPLMIIFFCYG). At 225–252 (RLVCTVKEAAAQQQESATTQKAEKEVTR) the chain is on the cytoplasmic side. Residues 253–274 (MVIIMVVAFLICWVPYASVAFY) traverse the membrane as a helical segment. Residues 275 to 286 (IFSNQGTDFGPI) are Extracellular-facing. Residues 287 to 308 (FMTVPAFFAKSSAIYNPVIYIV) traverse the membrane as a helical segment. At Lys-296 the chain carries N6-(retinylidene)lysine. At 309–354 (LNKQFRNCMITTICCGKNPFGDDETTSAATSKTEASSVSSSQVSPA) the chain is on the cytoplasmic side. 2 S-palmitoyl cysteine lipidation sites follow: Cys-322 and Cys-323. The interval 332-354 (ETTSAATSKTEASSVSSSQVSPA) is disordered. The span at 334–354 (TSAATSKTEASSVSSSQVSPA) shows a compositional bias: low complexity.

This sequence belongs to the G-protein coupled receptor 1 family. Opsin subfamily. In terms of processing, contains one covalently linked retinal chromophore. Upon light absorption, the covalently bound 11-cis-retinal is converted to all-trans-retinal. After hydrolysis of the Schiff base and release of the covalently bound all-trans-retinal, active rhodopsin is regenerated by binding of a fresh molecule of 11-cis-retinal.

Its subcellular location is the membrane. It is found in the cell projection. The protein resides in the cilium. The protein localises to the photoreceptor outer segment. In terms of biological role, photoreceptor required for image-forming vision at low light intensity. Required for photoreceptor cell viability after birth. Light-induced isomerization of 11-cis to all-trans retinal triggers a conformational change that activates signaling via G-proteins. Subsequent receptor phosphorylation mediates displacement of the bound G-protein alpha subunit by arrestin and terminates signaling. This is Rhodopsin (RHO) from Ambystoma tigrinum (Eastern tiger salamander).